A 301-amino-acid polypeptide reads, in one-letter code: GTPase Era (301 aa).

In terms of domain architecture, Era-type G spans 4 to 173 (KAGFVALIGK…LECISKHLIP (170 aa)). The tract at residues 12 to 19 (GKPNAGKS) is G1. GTP is bound at residue 12–19 (GKPNAGKS). Residues 38 to 42 (NATRK) are G2. The interval 64–67 (DTPG) is G3. GTP-binding positions include 64–68 (DTPGL) and 122–125 (SKID). Residues 122–125 (SKID) form a G4 region. The G5 stretch occupies residues 152–154 (LSA). The KH type-2 domain occupies 204-280 (LSDEIPYESD…FLNLQVIAQK (77 aa)).

This sequence belongs to the TRAFAC class TrmE-Era-EngA-EngB-Septin-like GTPase superfamily. Era GTPase family. In terms of assembly, monomer.

It localises to the cytoplasm. It is found in the cell inner membrane. Functionally, an essential GTPase that binds both GDP and GTP, with rapid nucleotide exchange. Plays a role in 16S rRNA processing and 30S ribosomal subunit biogenesis and possibly also in cell cycle regulation and energy metabolism. The chain is GTPase Era from Helicobacter pylori (strain HPAG1).